A 118-amino-acid polypeptide reads, in one-letter code: Large ribosomal subunit protein uL18 (118 aa).

Belongs to the universal ribosomal protein uL18 family. As to quaternary structure, part of the 50S ribosomal subunit; part of the 5S rRNA/L5/L18/L25 subcomplex. Contacts the 5S and 23S rRNAs.

In terms of biological role, this is one of the proteins that bind and probably mediate the attachment of the 5S RNA into the large ribosomal subunit, where it forms part of the central protuberance. The protein is Large ribosomal subunit protein uL18 of Helicobacter hepaticus (strain ATCC 51449 / 3B1).